We begin with the raw amino-acid sequence, 187 residues long: Biogenesis of lysosome-related organelles complex 1 subunit 5 (187 aa).

Positions 1–26 (MSGGGTETPVGCEAAPGGGSKKRDSL) are disordered. Ser-2 is modified (N-acetylserine). Positions 154-186 (NKRAEVDEEHRKAMERLKEQYAEMEKDLAKFST) form a coiled coil.

Belongs to the BLOC1S5 family. In terms of assembly, interacts with BLOC1S4, DTNBP1/BLOC1S7 and PI4K2A. Component of the biogenesis of lysosome-related organelles complex 1 (BLOC-1) composed of BLOC1S1, BLOC1S2, BLOC1S3, BLOC1S4, BLOC1S5, BLOC1S6, DTNBP1/BLOC1S7 and SNAPIN/BLOC1S8. Octamer composed of one copy each BLOC1S1, BLOC1S2, BLOC1S3, BLOC1S4, BLOC1S5, BLOC1S6, DTNBP1/BLOC1S7 and SNAPIN/BLOC1S8. The BLOC-1 complex associates with the AP-3 protein complex and membrane protein cargos. Interacts with BLOC1S6.

Functionally, component of the BLOC-1 complex, a complex that is required for normal biogenesis of lysosome-related organelles (LRO), such as platelet dense granules and melanosomes. In concert with the AP-3 complex, the BLOC-1 complex is required to target membrane protein cargos into vesicles assembled at cell bodies for delivery into neurites and nerve terminals. The BLOC-1 complex, in association with SNARE proteins, is also proposed to be involved in neurite extension. Plays a role in intracellular vesicle trafficking. This Homo sapiens (Human) protein is Biogenesis of lysosome-related organelles complex 1 subunit 5.